We begin with the raw amino-acid sequence, 411 residues long: Allantoate amidohydrolase (411 aa).

4 residues coordinate Zn(2+): histidine 81, aspartate 92, glutamate 127, and histidine 190. The allantoate site is built by arginine 215, asparagine 275, and arginine 288. Histidine 382 contributes to the Zn(2+) binding site.

This sequence belongs to the peptidase M20 family. As to quaternary structure, homodimer. Zn(2+) is required as a cofactor.

The protein resides in the cytoplasm. The catalysed reaction is allantoate + H2O + 2 H(+) = (S)-2-ureidoglycine + NH4(+) + CO2. The protein operates within nitrogen metabolism; (S)-allantoin degradation. With respect to regulation, sulfate could be an allosteric effector of the enzyme that is responsible for stabilizing substrate binding. In addition, this anion effector may act as a counterion during enzyme-mediated catalysis. Functionally, involved in the anaerobic nitrogen utilization via the assimilation of allantoin. Catalyzes specifically the hydrolysis of allantoate to yield CO2, NH3 and S-ureidoglycine, which is unstable and readily undergoes a second deamination by S-ureidoglycine aminohydrolase AllE to yield S-ureidoglycolate and NH3. In vivo, the spontaneous release of S-ureidoglycolate and ammonia from S-ureidoglycine appears to be too slow to sustain an efficient flux of nitrogen. The chain is Allantoate amidohydrolase from Escherichia coli (strain K12).